A 414-amino-acid polypeptide reads, in one-letter code: Glucose-1-phosphate adenylyltransferase (414 aa).

Alpha-D-glucose 1-phosphate-binding positions include glycine 164, 181 to 182 (EK), and serine 199.

The protein belongs to the bacterial/plant glucose-1-phosphate adenylyltransferase family. In terms of assembly, homotetramer.

It catalyses the reaction alpha-D-glucose 1-phosphate + ATP + H(+) = ADP-alpha-D-glucose + diphosphate. Its pathway is glycan biosynthesis; glycogen biosynthesis. In terms of biological role, involved in the biosynthesis of ADP-glucose, a building block required for the elongation reactions to produce glycogen. Catalyzes the reaction between ATP and alpha-D-glucose 1-phosphate (G1P) to produce pyrophosphate and ADP-Glc. The sequence is that of Glucose-1-phosphate adenylyltransferase from Leifsonia xyli subsp. xyli (strain CTCB07).